The primary structure comprises 440 residues: Proline--tRNA ligase (440 aa).

It belongs to the class-II aminoacyl-tRNA synthetase family. ProS type 2 subfamily. As to quaternary structure, homodimer.

Its subcellular location is the cytoplasm. The catalysed reaction is tRNA(Pro) + L-proline + ATP = L-prolyl-tRNA(Pro) + AMP + diphosphate. Its function is as follows. Catalyzes the attachment of proline to tRNA(Pro) in a two-step reaction: proline is first activated by ATP to form Pro-AMP and then transferred to the acceptor end of tRNA(Pro). The sequence is that of Proline--tRNA ligase from Azorhizobium caulinodans (strain ATCC 43989 / DSM 5975 / JCM 20966 / LMG 6465 / NBRC 14845 / NCIMB 13405 / ORS 571).